The following is a 130-amino-acid chain: Galectin-2 (130 aa).

The Galectin domain occupies 4 to 130 (KFEVKDLNMK…GLQISSFKLE (127 aa)). 65–71 (WGQEQRE) contacts a beta-D-galactoside.

Homodimer.

Its function is as follows. This protein binds beta-galactoside. Its physiological function is not yet known. This chain is Galectin-2 (Lgals2), found in Mus musculus (Mouse).